We begin with the raw amino-acid sequence, 1374 residues long: DNA-directed RNA polymerase subunit beta (1374 aa).

Belongs to the RNA polymerase beta chain family. The RNAP catalytic core consists of 2 alpha, 1 beta, 1 beta' and 1 omega subunit. When a sigma factor is associated with the core the holoenzyme is formed, which can initiate transcription.

It catalyses the reaction RNA(n) + a ribonucleoside 5'-triphosphate = RNA(n+1) + diphosphate. Functionally, DNA-dependent RNA polymerase catalyzes the transcription of DNA into RNA using the four ribonucleoside triphosphates as substrates. This is DNA-directed RNA polymerase subunit beta from Acidovorax ebreus (strain TPSY) (Diaphorobacter sp. (strain TPSY)).